We begin with the raw amino-acid sequence, 314 residues long: MTIEIPAHMHPSRSFQGLILTLHNYWAAYGCVILQPYDMEVGAGTFHPATTLRALGPKRWNAAYVQPSRRPKDGRYGENPNRLQHYYQYQVILKPNPPNLQELYLGSLAAIGVDPLLHDIRFVEDDWESPTLGAWGLGWECWCDGMEVSQFTYFQQVCGIECAPVAGELTYGLERLAMYVQGVDNVYDLNFNGREGADKVTYGDVFLQAEQEYSRHNFEYADTAMLLRHFEDAEAECKALLDAGAPASNDNLPMHKMVFPAYDQCIKASHVFNLLDARGVISVTERQSYILRVRNLAKACGEAFLKTQAGGLAA.

This sequence belongs to the class-II aminoacyl-tRNA synthetase family. Tetramer of two alpha and two beta subunits.

The protein localises to the cytoplasm. It carries out the reaction tRNA(Gly) + glycine + ATP = glycyl-tRNA(Gly) + AMP + diphosphate. In Mesorhizobium japonicum (strain LMG 29417 / CECT 9101 / MAFF 303099) (Mesorhizobium loti (strain MAFF 303099)), this protein is Glycine--tRNA ligase alpha subunit.